The sequence spans 38 residues: Potassium channel toxin alpha-KTx 3.3 (38 aa).

3 disulfides stabilise this stretch: Cys8/Cys28, Cys14/Cys33, and Cys18/Cys35. The interval 26–33 (GKCMNRKC) is interaction with Ca(2+)-activated K(+) channels.

It belongs to the short scorpion toxin superfamily. Potassium channel inhibitor family. Alpha-KTx 03 subfamily. In terms of tissue distribution, expressed by the venom gland.

Its subcellular location is the secreted. Functionally, potent inhibitor of shaker potassium channels as well as the mammalian homologs of shaker. This Leiurus hebraeus (Hebrew deathstalker scorpion) protein is Potassium channel toxin alpha-KTx 3.3.